Reading from the N-terminus, the 65-residue chain is UPF0291 protein BBR47_33060 (65 aa).

This sequence belongs to the UPF0291 family.

Its subcellular location is the cytoplasm. This is UPF0291 protein BBR47_33060 from Brevibacillus brevis (strain 47 / JCM 6285 / NBRC 100599).